We begin with the raw amino-acid sequence, 357 residues long: 4-hydroxymandelate synthase (357 aa).

VOC domains are found at residues 5-129 (EIDY…LIQR) and 158-309 (GIDH…IFTA). A Fe cation-binding site is contributed by His161. Substrate is bound by residues His161, Ser201, Thr214, His241, and Gln305. His241 serves as a coordination point for Fe cation. A Fe cation-binding site is contributed by Glu320.

It belongs to the 4HPPD family. As to quaternary structure, monomer. The cofactor is Fe cation.

The enzyme catalyses 3-(4-hydroxyphenyl)pyruvate + O2 = (S)-4-hydroxymandelate + CO2. It functions in the pathway antibiotic biosynthesis; vancomycin biosynthesis. Its function is as follows. Required to synthesize hydroxyphenylglycine, a recurring skeletal component of nonproteinogenic macrocyclic peptide antibiotics such as vancomycin. Catalyzes the conversion of p-hydroxyphenylpyruvate to p-hydroxymandelate. The decarboxylation and hydroxylation activities of HmaS show novel and distinct regioselectivity, compared to all other known p-hydroxyphenylpyruvate dioxygenases, by hydroxylating the benzylic position of the substrate instead of the phenyl ring. This is 4-hydroxymandelate synthase from Amycolatopsis orientalis (Nocardia orientalis).